A 278-amino-acid chain; its full sequence is 4-deoxy-L-threo-5-hexosulose-uronate ketol-isomerase (278 aa).

Residues H196, H198, E203, and H245 each coordinate Zn(2+).

It belongs to the KduI family. It depends on Zn(2+) as a cofactor.

It catalyses the reaction 5-dehydro-4-deoxy-D-glucuronate = 3-deoxy-D-glycero-2,5-hexodiulosonate. Its pathway is glycan metabolism; pectin degradation; 2-dehydro-3-deoxy-D-gluconate from pectin: step 4/5. In terms of biological role, catalyzes the isomerization of 5-dehydro-4-deoxy-D-glucuronate to 3-deoxy-D-glycero-2,5-hexodiulosonate. This is 4-deoxy-L-threo-5-hexosulose-uronate ketol-isomerase from Salmonella agona (strain SL483).